We begin with the raw amino-acid sequence, 2098 residues long: Non-reducing polyketide synthase crz7 (2098 aa).

The region spanning 8-243 (ILFGDQTVDP…IKLPITAAFH (236 aa)) is the Starter acyltransferase (SAT) domain. The Ketosynthase family 3 (KS3) domain occupies 364-789 (SSDIAIIGFA…GGNTSLLLED (426 aa)). Catalysis depends on for beta-ketoacyl synthase activity residues Cys-532, His-667, and His-706. The Malonyl-CoA:ACP transacylase (MAT) domain maps to 887–1211 (IFLFTGQGSQ…IANAYNSGVK (325 aa)). The interval 1270 to 1404 (TCLQGVENET…CTVMYGDGQQ (135 aa)) is N-terminal hotdog fold. One can recognise a PKS/mFAS DH domain in the interval 1270 to 1578 (TCLQGVENET…FQQMKRTTLQ (309 aa)). Residue His-1305 is the Proton acceptor; for dehydratase activity of the active site. Residues 1431 to 1578 (IHRMLKEMIY…FQQMKRTTLQ (148 aa)) form a C-terminal hotdog fold region. The active-site Proton donor; for dehydratase activity is the Asp-1491. One can recognise a Carrier 1 domain in the interval 1613–1690 (QSPSAGFSKV…ELRAFFLDKM (78 aa)). Ser-1650 bears the O-(pantetheine 4'-phosphoryl)serine mark. The segment at 1693 to 1725 (PQATANDDDSDDSSEDEDPGYSRSQSNSTISTP) is disordered. Residues 1698-1711 (NDDDSDDSSEDEDP) show a composition bias toward acidic residues. Polar residues predominate over residues 1714 to 1724 (SRSQSNSTIST). The Carrier 2 domain maps to 1725–1802 (PEEPDVVSIL…DVQKALGPTS (78 aa)). An O-(pantetheine 4'-phosphoryl)serine modification is found at Ser-1762. The thioesterase (TE) domain stretch occupies residues 1844-2080 (LFLLPDGAGS…VSGNHFSIMF (237 aa)).

Pantetheine 4'-phosphate is required as a cofactor.

It functions in the pathway secondary metabolite biosynthesis. Non-reducing polyketide synthase; part of the gene cluster that mediates the biosynthesis of the red pigment cristazarin, a naphthazarin derivative. The polyketide product of crz7 is likely 2-acetyl-1,3,6,8-tetrahydoxynaphthalene (AT4HN) from which a probable biosynthetic route of cristazarin can be deduced. The presence of two O-methyltransferases (crz1 and crz2), an enoyl reductase (crz5), an oxidase (crz8), and a short-chain dehydrogenase (crz9) encoded in the cristazarin biosynthetic cluster is consistent with methylation of a hydroxyl group, addition of two hydroxyl groups to the naphthalene core ring, and reduction of the acetyl side chain. The protein is Non-reducing polyketide synthase crz7 of Cladonia metacorallifera (Lichen-forming fungus).